Consider the following 81-residue polypeptide: MLVLSRKANESIKINSDIEVLILEIKKDAVKIAIKAPENIKIFRSEIYEFIIEENKKSLLKDKHNISKIKSLFNHYFKNEN.

This sequence belongs to the CsrA/RsmA family. In terms of assembly, homodimer; the beta-strands of each monomer intercalate to form a hydrophobic core, while the alpha-helices form wings that extend away from the core.

It localises to the cytoplasm. Its function is as follows. A translational regulator that binds mRNA to regulate translation initiation and/or mRNA stability. Usually binds in the 5'-UTR at or near the Shine-Dalgarno sequence preventing ribosome-binding, thus repressing translation. Its main target seems to be the major flagellin gene, while its function is anatagonized by FliW. The sequence is that of Translational regulator CsrA from Borreliella burgdorferi (strain ATCC 35210 / DSM 4680 / CIP 102532 / B31) (Borrelia burgdorferi).